We begin with the raw amino-acid sequence, 581 residues long: Chaotic nuclear migration protein 67 (581 aa).

5 positions are modified to phosphoserine: serine 17, serine 20, serine 72, serine 85, and serine 89. Residues 86-150 (YQESPGLQER…PTDEHTSPDI (65 aa)) are disordered. Basic and acidic residues predominate over residues 94–114 (ERPKNEKDKSPIGTDVHKKDV). Serine 151 is modified (phosphoserine). 3 coiled-coil regions span residues 179–252 (LGYQ…DTIQ), 306–363 (FLCA…LSKQ), and 373–451 (KLTI…NTSE).

As to quaternary structure, interacts directly with ADY3 and YOR129C. Interacts with ADY4. Probable component of a SPB complex composed of ADY3, SSP1, DON1, MPC54, SPO21/MPC70, NUD1 and CNM67. Phosphorylated in its N-terminal part.

The protein localises to the cytoplasm. It localises to the cytoskeleton. It is found in the microtubule organizing center. Its subcellular location is the spindle pole body. In terms of biological role, involved in the pathway that organizes the shaping and sizing of the prospore membrane (PSM) during sporulation. Required for the proper formation of the spindle pole body (SPB) outer plaque. May connect the outer plaque to the central plaque embedded in the nuclear envelope. This Saccharomyces cerevisiae (strain ATCC 204508 / S288c) (Baker's yeast) protein is Chaotic nuclear migration protein 67 (CNM67).